Reading from the N-terminus, the 132-residue chain is Small ribosomal subunit protein uS8 (132 aa).

The protein belongs to the universal ribosomal protein uS8 family. As to quaternary structure, part of the 30S ribosomal subunit. Contacts proteins S5 and S12.

One of the primary rRNA binding proteins, it binds directly to 16S rRNA central domain where it helps coordinate assembly of the platform of the 30S subunit. The sequence is that of Small ribosomal subunit protein uS8 from Clostridium kluyveri (strain NBRC 12016).